The following is a 160-amino-acid chain: MAIEKKPDLSDPKLRAKLAQGMGHNYYGEPAWPNDLLYVFPVVILGTIGLLVGLAVLDPALIGEPADPFATPLEILPEWYLYPVFQILRVLPNKLLGIACQGAIPLGLLLVPFIESVNKFQNPFRRPIATAVFLFGTVVTIWLGAGATFPIDESLTLGLF.

3 helical membrane passes run 36-56, 95-115, and 131-151; these read LLYVFPVVILGTIGLLVGLAV, LLGIACQGAIPLGLLLVPFIE, and AVFLFGTVVTIWLGAGATFPI.

It belongs to the cytochrome b family. PetD subfamily. As to quaternary structure, the 4 large subunits of the cytochrome b6-f complex are cytochrome b6, subunit IV (17 kDa polypeptide, PetD), cytochrome f and the Rieske protein, while the 4 small subunits are PetG, PetL, PetM and PetN. The complex functions as a dimer.

It localises to the cellular thylakoid membrane. Functionally, component of the cytochrome b6-f complex, which mediates electron transfer between photosystem II (PSII) and photosystem I (PSI), cyclic electron flow around PSI, and state transitions. This is Cytochrome b6-f complex subunit 4 from Crocosphaera subtropica (strain ATCC 51142 / BH68) (Cyanothece sp. (strain ATCC 51142)).